The chain runs to 156 residues: Cytochrome c-type biogenesis protein CcmE (156 aa).

Topologically, residues methionine 1–arginine 16 are cytoplasmic. A helical; Signal-anchor for type II membrane protein transmembrane segment spans residues leucine 17–alanine 37. Residues leucine 38–lysine 156 are Periplasmic-facing. 2 residues coordinate heme: histidine 131 and tyrosine 135.

This sequence belongs to the CcmE/CycJ family.

The protein resides in the cell inner membrane. Heme chaperone required for the biogenesis of c-type cytochromes. Transiently binds heme delivered by CcmC and transfers the heme to apo-cytochromes in a process facilitated by CcmF and CcmH. This Novosphingobium aromaticivorans (strain ATCC 700278 / DSM 12444 / CCUG 56034 / CIP 105152 / NBRC 16084 / F199) protein is Cytochrome c-type biogenesis protein CcmE.